We begin with the raw amino-acid sequence, 67 residues long: Medusin-PT (67 aa).

Residues 1–22 (MAFLKKSLFLVFFLGFVSLSIC) form the signal peptide. Positions 23 to 48 (EEEKRETDEKENEQEDDREERSEEKR) are excised as a propeptide. The tract at residues 25 to 46 (EKRETDEKENEQEDDREERSEE) is disordered. Residues 31 to 40 (EKENEQEDDR) are compositionally biased toward acidic residues. At Leu66 the chain carries Leucine amide.

The protein belongs to the frog skin active peptide (FSAP) family. Medusin subfamily. Post-translationally, in the synthetic mutant medusin-PT1a [T58K], the Leu-50 has been modified in a D-amino acid. In medusin-PT1a, there is an increase in antimicrobial activity, and an increase in hemolytic activity. It is more potent against S.aureus and gains activity against MRSA, E.faecalis, E.coli, P.aeruginosa and C.albicans. There is an important increase in both biofilm inhibition and biofilm eradication. In terms of tissue distribution, expressed by the skin glands.

The protein resides in the secreted. It is found in the target cell membrane. Antimicrobial peptide with activity against Gram-positive bacteria S.epidermidis ATCC 12228 (MIC=50 uM) and S.aureus (MIC=64 ug/ml and MBC=128 ug/ml). Not active against some Gram-positive bacteria (methicillin-resistant S.aureus (MRSA), E.faecalis), Gram-negative bacterium E.coli ATCC 25922 and fungus C.albicans at concentrations up to 100 uM. Can only slightly inhibit the formation of biofilm by S.aureus (minimal biofilm inhibitionconcentration MBIC=512 ug/ml, minimal biofilm eradication concentration MBEC&gt;512 ug/ml). Has an anti-inflammatory effect, since it inhibits the production of the pro-inflammatory cytokines TNF-alpha and IL-1beta. Has high activity of stimulation of insulin release, which may protect the species from being eaten by predators by causing fatal hypoglycemia. Is not cytotoxic to cancer line cells. Shows very low hemolysis on horse erythrocytes and moderate hemolysis on mouse erythrocytes. In Phyllomedusa tarsius (Brownbelly leaf frog), this protein is Medusin-PT.